We begin with the raw amino-acid sequence, 1587 residues long: MIEPTKISILGQESIVADFGLWRNYVAKDLISGCPSTTYVLITDTNIGSIYTPSFQKSFEEAAAAVTPSPRLLTYYAPPGEVSKSRQTKADIEDWMLSQSPPCGRDTVIIALGGGVIGDLTGFVAATYMRGVRFVQVPTTLLAMVDSSIGGKTAIDTPLGKNLIGAIWQPARIYIDLEFLETLPVREFINGMAEVIKTAAISSEEEFTALEDNAETILAAVRREVKPGQRRFDGIEQILKARILASARHKAFVVSEDEREGGLRNLLNWGHSIGHAIEAILTPQILHGECVAIGMVKEAELARHLGVLKGVAVARIVKCIAAYGLPTSLKDARIRKLTAGKHCSVDQLLFNMALDKKNDGPKKKVVLLSAIGRTYEPRASVVANEDIGVVLAPSIEVFPGVSPKSTVICAPPGSKSISNRALVLAALGSGTCRIKNLLHSDDTEVMLNALERIGAATFSWEEEGEVLVVNGKGGALQAHPSELYLGNAGTASRFLTTVATLATPSNVDFSILTGNNRMKQRPIGDLVEALIANGAQVEYMESKGSLPLKIAASGGFTGGQINLAAKVSSQYVSSLLMCAPYAKEPVTLKLVGGKPISQPYIDMTTAMMRSFGIDVQKSTTEEHTYHIPQGRYTNPAEYVVESDASSATYPLAIAAVTGTTCTVPNIGSKSLQGDARFAVDVLRPMGCTVEQTDTSTTVTGPADGVLRPLPNVDMEPMTDAFLGASVLAAIARGEGSNHTTRIYGIANQRVKECNRIKAMHDELAKFGVVCREHEDGLEIDGIDRANLRQPAGGVFCYDDHRVAFSFSVLSLVAPKPTLILEKECVGKTWPGWWDTLRLKFAVKLEGRELKEAESPVLTSAEKASASVFIIGMRGAGKTTSGHWVASTLNRPFIDLDDELERIEGMTIPDIIKERGWQGFRDAELSLLQRTMKERPTGHVFACGGGVVEVPEARKLLINWHKSKGNVLLIMRDIKQVMDFLNIDKTRPAYVEDMMGVWLRRKPWFQECSNIQYYSQHASSGLTRASEDFARFVKIVTGQVDSLGAIKKKQHSFFVSLTLPDLRPAGDILEQACVGSDAVELRVDLLKDPSSSNGIPSVDYVAEQMSFLRSHTTLPLIFTIRTKSQGGFFPDEAHEEAMQLYQLAFRSGCEFVDLEIAFPDELLRTVSEMKGYSKIIASHHDPKGELSWANMSWMKYYNRALEYGDVIKLVGVATKLDDNTALRKFKSWAEEAHDVPLIAINMGDNGQLSRILNGFMTPVSHPALPFKAAPGQLSATEICKGLSLMGQIKKKRFALFGTPISESRSPALHNSLFAELGLPHEYTRLETANAEDVKEFIRAPDFGGASVTIPLKLDIMPLLDEIAPEAEIIGAVNTIVPVSDGEGKPQRLVGHNTDWQGMVQCLRNAGAYGSNGDASALVVGGGGTCRAGIYALHQMGYSPIYIVGRNLGKLQAMASTFPSSYNIRILEGNETLEHVPHVAIGTIPGDQPIDPGMREILCHMFARAEEADADAVRSIEGSPRVLLEMAYKPPVTALMQLATDAGWTTIPGLEVLVGQGFYQGGITQFQHWTGIRPLYEHARDAVLGTKAD.

The 3-dehydroquinate synthase stretch occupies residues Met1–Asn384. NAD(+)-binding positions include Asp44–Asn46, Glu81–Lys84, Gly114–Val116, and Asp119. 7-phospho-2-dehydro-3-deoxy-D-arabino-heptonate is bound at residue Arg130. NAD(+) is bound at residue Thr139–Thr140. Asp146 and Lys152 together coordinate 7-phospho-2-dehydro-3-deoxy-D-arabino-heptonate. Residue Lys161 coordinates NAD(+). Asn162 serves as a coordination point for 7-phospho-2-dehydro-3-deoxy-D-arabino-heptonate. Residues Phe179–Thr182 and Asn190 each bind NAD(+). Glu194 provides a ligand contact to Zn(2+). 7-phospho-2-dehydro-3-deoxy-D-arabino-heptonate-binding positions include Glu194–Lys197 and Lys250. Residue Glu260 is the Proton acceptor; for 3-dehydroquinate synthase activity of the active site. 7-phospho-2-dehydro-3-deoxy-D-arabino-heptonate is bound by residues Arg264–Asn268 and His271. His271 serves as a coordination point for Zn(2+). His275 acts as the Proton acceptor; for 3-dehydroquinate synthase activity in catalysis. Residues His287 and Lys356 each coordinate 7-phospho-2-dehydro-3-deoxy-D-arabino-heptonate. His287 contacts Zn(2+). Residues Val397 to Val842 form an EPSP synthase region. The active-site For EPSP synthase activity is the Cys824. The tract at residues Ser864–Ser1055 is shikimate kinase. Gly871–Thr878 is an ATP binding site. The tract at residues Leu1056–Glu1276 is 3-dehydroquinase. Catalysis depends on His1179, which acts as the Proton acceptor; for 3-dehydroquinate dehydratase activity. Lys1207 acts as the Schiff-base intermediate with substrate; for 3-dehydroquinate dehydratase activity in catalysis. The shikimate dehydrogenase stretch occupies residues Lys1289–Asp1587.

The protein in the N-terminal section; belongs to the sugar phosphate cyclases superfamily. Dehydroquinate synthase family. It in the 2nd section; belongs to the EPSP synthase family. This sequence in the 3rd section; belongs to the shikimate kinase family. In the 4th section; belongs to the type-I 3-dehydroquinase family. The protein in the C-terminal section; belongs to the shikimate dehydrogenase family. As to quaternary structure, homodimer. It depends on Zn(2+) as a cofactor.

It is found in the cytoplasm. It catalyses the reaction 7-phospho-2-dehydro-3-deoxy-D-arabino-heptonate = 3-dehydroquinate + phosphate. The catalysed reaction is 3-dehydroquinate = 3-dehydroshikimate + H2O. The enzyme catalyses shikimate + NADP(+) = 3-dehydroshikimate + NADPH + H(+). It carries out the reaction shikimate + ATP = 3-phosphoshikimate + ADP + H(+). It catalyses the reaction 3-phosphoshikimate + phosphoenolpyruvate = 5-O-(1-carboxyvinyl)-3-phosphoshikimate + phosphate. Its pathway is metabolic intermediate biosynthesis; chorismate biosynthesis; chorismate from D-erythrose 4-phosphate and phosphoenolpyruvate: step 2/7. It participates in metabolic intermediate biosynthesis; chorismate biosynthesis; chorismate from D-erythrose 4-phosphate and phosphoenolpyruvate: step 3/7. It functions in the pathway metabolic intermediate biosynthesis; chorismate biosynthesis; chorismate from D-erythrose 4-phosphate and phosphoenolpyruvate: step 4/7. The protein operates within metabolic intermediate biosynthesis; chorismate biosynthesis; chorismate from D-erythrose 4-phosphate and phosphoenolpyruvate: step 5/7. Its pathway is metabolic intermediate biosynthesis; chorismate biosynthesis; chorismate from D-erythrose 4-phosphate and phosphoenolpyruvate: step 6/7. The AROM polypeptide catalyzes 5 consecutive enzymatic reactions in prechorismate polyaromatic amino acid biosynthesis. The protein is Pentafunctional AROM polypeptide of Aspergillus clavatus (strain ATCC 1007 / CBS 513.65 / DSM 816 / NCTC 3887 / NRRL 1 / QM 1276 / 107).